A 78-amino-acid polypeptide reads, in one-letter code: UPF0291 protein MCCL_0996 (78 aa).

This sequence belongs to the UPF0291 family.

It localises to the cytoplasm. This is UPF0291 protein MCCL_0996 from Macrococcus caseolyticus (strain JCSC5402) (Macrococcoides caseolyticum).